The following is a 145-amino-acid chain: Hydrophobin-like protein 1 (145 aa).

The N-terminal stretch at 1–20 (MYLLQISISLLLLISTAATA) is a signal peptide. N-linked (GlcNAc...) asparagine glycosylation is present at N36. 4 cysteine pairs are disulfide-bonded: C61-C121, C71-C113, C72-C104, and C122-C139.

Its subcellular location is the secreted. It is found in the cell wall. Functionally, aerial growth, conidiation, and dispersal of filamentous fungi in the environment rely upon a capability of their secreting small amphipathic proteins called hydrophobins (HPBs) with low sequence identity. Class I can self-assemble into an outermost layer of rodlet bundles on aerial cell surfaces, conferring cellular hydrophobicity that supports fungal growth, development and dispersal; whereas Class II form highly ordered films at water-air interfaces through intermolecular interactions but contribute nothing to the rodlet structure. In Botryotinia fuckeliana, hydrophobins are not involved in conferring surface hydrophobicity to conidia and aerial hyphae and their function in sclerotia and fruiting bodies remains to be investigated. The chain is Hydrophobin-like protein 1 from Botryotinia fuckeliana (strain B05.10) (Noble rot fungus).